The primary structure comprises 1515 residues: MESLSNLGNAMSSVLSETTSTTATAILADPTEALSSVVALASDAVSKATSDVVPEHTPTSWFTIILWLLHRISSVLYFVIKLTTITTPTFLFNIFSTSLTVTMNATTLVLIMLFMMAGVTWVVRYRYLNMYSRLPPEPQRKEPAVDLFPETQEEGVKSGLASYFDEFLSAIKIFGYLERPVFHELTRSMQTRKLIAGETLNLEEEQGFCLVVDGMVEIFVKSARDGRRSSSGPSFESDDEEGFAPGRQRYQLLTEVRNGAPMSSLFSIMSLFTEDIQMHDTDDDDSPDPTPSAPGTAMPGYPMNANFQQSNDTLPSIPGTPLSDNHVMQRGMASAESLTMSPLAHDSSRIPSLSLVNTRPAVPRRPVPKRLNTTSAHPDIIARATVDTTIAIIPASAFRRLIKIYPKATAHIVHVILSRFQRVTLATAYNYLGLSGEVLQMERNILKHTVRQLPNHLRGDALDRLKEKFKRERERIGEKEVEKGIALHNAHAARRRRSAASLRKEVALQAYSKRRQSIVTATPAFGTRRERPSPDMPSPGDLLTNTQQLKSGPASQLDLARDATSPRPQRNLSPFSTPRNAHVSLDTREALDEDDMFRESVLECMFRAIGLTGNGSVNPDSTQASPRFVPTDQRRSRGGPGHTAFGFMDAFDPFDNDTESVTSCGFSSSSPVPNPQLLAHDMKDEVEIVFFPKGSVLVEQGERNPGLYYVIDGFLDICVPGDDSSHDLLQSSAKVDHGHDSATGADAFGANSSRFPEPNMNNNFGAEQKKGKQGRRSVALIKPGGLAGYVGTISSYRSFIDVVARTDVCVGFLPLASIDRIVDRYPIVMLTMAKRLTELLPRLLLHIDFALEWVQVNSGQVLFREGDESEAIYLVLNGRLRLVEDQKDGGMNVKAEFGQGESIGELEVLTESARTGTLHAIRETELVKFPRTLFNSLAQEHPNITIKISKIIAARMRAFIDDPSRMGLKDNVVRSYKSSSTLNLRTVAILPVTAGVPVVEFGNRLMNALSQVGPPNGATCLNQAAILNHLGKLAFNRMGKLKLSQYLADLEEKYGLVVYVADTNVNTPWTQTCITQADCLLFVGLADSSPEIGEYERFMLGMKSTARKILVLVHQERYSNPGLTRQWLKNRMWINGGHFHVQMAYTSNTVPIHPPTKRFGPSLKQRVQILQAEIQKYTSRKVRHVPFYSPDAPFKGDFHRLARRLCGKSVGLVLGGGGARGIAHVGIIRAMEEAGIPIDMVGGTSIGAFIGGLYARHADVVPIFGLAKKFAGRMASMWRFAFDLTYPSASYTTGHEFNRGIFKTFGKTQIEDFWLEYYCNTTNISKSRVEFHTSGYAWRYIRASMSLAGLLPPLCDEGSMLLDGGYIDNLTVSRMKSLGSDVIFAVDVGSLDDNTPQAFGDSLSGVWAFFNRWNPFSSVPNPPTLAEIQARLAYVSSVGELERAKTMPGCIYMRPPIDDYGTLDFGKFDEIYGVGYKYGQEFLQKLREQGVLPLVEETEAKKALRRTMAPRRASI.

Residues 1–59 lie on the Cytoplasmic side of the membrane; that stretch reads MESLSNLGNAMSSVLSETTSTTATAILADPTEALSSVVALASDAVSKATSDVVPEHTPT. A helical membrane pass occupies residues 60 to 80; that stretch reads SWFTIILWLLHRISSVLYFVI. At 81–102 the chain is on the lumenal side; sequence KLTTITTPTFLFNIFSTSLTVT. The helical transmembrane segment at 103 to 123 threads the bilayer; sequence MNATTLVLIMLFMMAGVTWVV. The Cytoplasmic segment spans residues 124-1515; that stretch reads RYRYLNMYSR…RTMAPRRASI (1392 aa). 3 disordered regions span residues 278–303, 519–580, and 617–639; these read MHDT…GYPM, VTAT…TPRN, and VNPD…SRGG. Composition is skewed to polar residues over residues 543–554 and 566–579; these read LTNTQQLKSGPA and PRPQ…STPR. A nucleoside 3',5'-cyclic phosphate contacts are provided by residues 670-789 and 835-955; these read SPVP…LAGY and RLTE…IAAR. The PNPLA domain maps to 1212–1376; the sequence is LVLGGGGARG…IDNLTVSRMK (165 aa). A GXGXXG motif is present at residues 1216-1221; it reads GGGARG. The GXSXG motif lies at 1243–1247; it reads GTSIG. S1245 (nucleophile) is an active-site residue. The Proton acceptor role is filled by D1363. The DGA/G motif lies at 1363–1365; it reads DGG.

The protein belongs to the NTE family.

The protein resides in the endoplasmic reticulum membrane. It catalyses the reaction a 1-acyl-sn-glycero-3-phosphocholine + H2O = sn-glycerol 3-phosphocholine + a fatty acid + H(+). With respect to regulation, inhibited by organophosphorus esters. Its function is as follows. Intracellular phospholipase B that catalyzes the double deacylation of phosphatidylcholine (PC) to glycerophosphocholine (GroPCho). Plays an important role in membrane lipid homeostasis. Responsible for the rapid PC turnover in response to inositol, elevated temperatures, or when choline is present in the growth medium. The sequence is that of Lysophospholipase nte1 (nte1) from Neurospora crassa (strain ATCC 24698 / 74-OR23-1A / CBS 708.71 / DSM 1257 / FGSC 987).